A 190-amino-acid chain; its full sequence is uncharacterized protein (190 aa).

This is an uncharacterized protein from Archaeoglobus fulgidus (strain ATCC 49558 / DSM 4304 / JCM 9628 / NBRC 100126 / VC-16).